Here is an 863-residue protein sequence, read N- to C-terminus: Neuroligin-1 (863 aa).

The N-terminal stretch at 1-45 is a signal peptide; sequence MALPRCTWPNYVWRAVMACLVHRGLGAPLTLCMLGCLLQAGHVLS. The Extracellular segment spans residues 46-717; that stretch reads QKLDDVDPLV…DQRDYSTELS (672 aa). Asn-109 carries an N-linked (GlcNAc...) (complex) asparagine glycan. A disulfide bridge connects residues Cys-117 and Cys-153. The segment at 183 to 212 is disordered; it reads KGGPLTKKQTDDLGDNDGAEDEDIRDSGGP. Positions 194–206 are enriched in acidic residues; sequence DLGDNDGAEDEDI. Residues Asn-323 and Asn-363 are each glycosylated (N-linked (GlcNAc...) (complex) asparagine). Disulfide bonds link Cys-362–Cys-373 and Cys-532–Cys-566. Asn-567 is a glycosylation site (N-linked (GlcNAc...) asparagine). Positions 670–708 are disordered; it reads PSTDITFRPTRKNSVPVTSAFPTAKQDDPKQQPSPFSVD. Residues 681–690 show a composition bias toward polar residues; the sequence is KNSVPVTSAF. O-linked (GalNAc...) serine glycans are attached at residues Ser-703 and Ser-706. A helical transmembrane segment spans residues 718 to 738; that stretch reads VTIAVGASLLFLNILAFAALY. Residues 739–863 lie on the Cytoplasmic side of the membrane; the sequence is YKKDKRRHDV…HPHSHSTTRV (125 aa). A disordered region spans residues 842-863; the sequence is GGQNNTLPHPHPHPHSHSTTRV. Positions 851 to 863 are enriched in basic residues; sequence PHPHPHSHSTTRV.

It belongs to the type-B carboxylesterase/lipase family. As to quaternary structure, interacts with neurexins NRXN1, NRXN2 and NRXN3. Interaction with neurexins is mediated by heparan sulfate glycan modification on neurexin. Interacts with NLGN3. Interacts with AIP1 and PDZRN3. Interacts (via its C-terminus) with DLG4/PSD-95 (via PDZ domain 3). Interacts with GOPC. In terms of tissue distribution, expressed in the blood vessel walls (at protein level). Highly expressed in brain through prenatal stages, and at lower levels in pancreas islet beta cells.

The protein resides in the cell membrane. It is found in the postsynaptic density. Its subcellular location is the synaptic cleft. It localises to the synaptic cell membrane. Functionally, cell surface protein involved in cell-cell-interactions via its interactions with neurexin family members. Plays a role in synapse function and synaptic signal transmission, and probably mediates its effects by recruiting and clustering other synaptic proteins. May promote the initial formation of synapses, but is not essential for this. In vitro, triggers the de novo formation of presynaptic structures. May be involved in specification of excitatory synapses. Required to maintain wakefulness quality and normal synchrony of cerebral cortex activity during wakefulness and sleep. The protein is involved in nervous system development. This chain is Neuroligin-1 (NLGN1), found in Homo sapiens (Human).